Here is a 33-residue protein sequence, read N- to C-terminus: Alpha-amanitin proprotein (33 aa).

A propeptide spanning residues 1–10 (MSDINATRLP) is cleaved from the precursor. Residue I11 is modified to (3R,4R)-4,5-dihydroxyisoleucine; in form alpha-amanitin. I11 bears the (3R,4S)-4-hydroxyisoleucine; in form gamma-amanitin mark. Positions 11–18 (IWGIGCNP) form a cross-link, cyclopeptide (Ile-Pro). A cross-link (2'-cysteinyl-6'-hydroxytryptophan sulfoxide (Trp-Cys)) is located at residues 12–16 (WGIGC). Position 18 is a 4-hydroxyproline (P18). Residues 19-33 (CVGDEVTALITRGEA) constitute a propeptide that is removed on maturation.

The protein belongs to the MSDIN fungal toxin family. In terms of processing, processed by the macrocyclase-peptidase enzyme POPB to yield a toxic cyclic decapeptide. POPB first removes 10 residues from the N-terminus. Conformational trapping of the remaining peptide forces the enzyme to release this intermediate rather than proceed to macrocyclization. The enzyme rebinds the remaining peptide in a different conformation and catalyzes macrocyclization of the N-terminal 8 residues.

Its function is as follows. Major toxin belonging to the bicyclic octapeptides amatoxins that acts by binding non-competitively to RNA polymerase II and greatly slowing the elongation of transcripts from target promoters. This is Alpha-amanitin proprotein from Amanita pallidorosea.